Here is a 141-residue protein sequence, read N- to C-terminus: Large ribosomal subunit protein uL11 (141 aa).

This sequence belongs to the universal ribosomal protein uL11 family. In terms of assembly, part of the ribosomal stalk of the 50S ribosomal subunit. Interacts with L10 and the large rRNA to form the base of the stalk. L10 forms an elongated spine to which L12 dimers bind in a sequential fashion forming a multimeric L10(L12)X complex. Post-translationally, one or more lysine residues are methylated.

In terms of biological role, forms part of the ribosomal stalk which helps the ribosome interact with GTP-bound translation factors. In Agathobacter rectalis (strain ATCC 33656 / DSM 3377 / JCM 17463 / KCTC 5835 / VPI 0990) (Eubacterium rectale), this protein is Large ribosomal subunit protein uL11.